Here is a 409-residue protein sequence, read N- to C-terminus: Probable tRNA pseudouridine synthase D (409 aa).

The active-site Nucleophile is aspartate 73. The TRUD domain occupies 146–365 (GFPNFFGDQR…SSGDRRIISA (220 aa)).

It belongs to the pseudouridine synthase TruD family.

The catalysed reaction is uridine(13) in tRNA = pseudouridine(13) in tRNA. Its function is as follows. Could be responsible for synthesis of pseudouridine from uracil-13 in transfer RNAs. In Thermoplasma volcanium (strain ATCC 51530 / DSM 4299 / JCM 9571 / NBRC 15438 / GSS1), this protein is Probable tRNA pseudouridine synthase D.